Consider the following 652-residue polypeptide: Vacuolar fusion protein MON1 homolog A (652 aa).

The tract at residues 102-141 is disordered; that stretch reads MQRKRSSECLDGTLTPSDGQSMERAESPTPGMAQGMEPGA. Ser128 and Ser153 each carry phosphoserine. Phosphothreonine is present on Thr158. Residues 158–185 form a disordered region; that stretch reads TESEDGAASGDSHKEGTRGPPPLPTDMR. Phosphoserine is present on Ser188. A disordered region spans residues 211-245; it reads PGSSEDWLEPPGAVGRPATEPPREGTTEGDEEDAT.

Belongs to the MON1/SAND family. Interacts with CCZ1. Found in a complex with RMC1, CCZ1, MON1A and MON1B. The MON1A-CCZ1B complex interacts with RIMOC1. The MON1A-CCZ1B complex interacts with RAB7A and this interaction is enhanced in the presence of RIMOC1.

Functionally, plays an important role in membrane trafficking through the secretory apparatus. Not involved in endocytic trafficking to lysosomes. Acts in concert with CCZ1, as a guanine exchange factor (GEF) for RAB7, promotes the exchange of GDP to GTP, converting it from an inactive GDP-bound form into an active GTP-bound form. This is Vacuolar fusion protein MON1 homolog A (MON1A) from Homo sapiens (Human).